Here is a 988-residue protein sequence, read N- to C-terminus: Transposase for transposon Tn1546 (988 aa).

This sequence belongs to the transposase 7 family.

Required for transposition of transposon Tn1546. The chain is Transposase for transposon Tn1546 from Enterococcus faecium (Streptococcus faecium).